The chain runs to 472 residues: FAD-dependent monooxygenase ltmM (472 aa).

A helical transmembrane segment spans residues 7–27; the sequence is VIIVGGSVAGLSLAHCLEKIG. FAD contacts are provided by E34, G48, and R107. N186 is a glycosylation site (N-linked (GlcNAc...) asparagine). Positions 306 and 319 each coordinate FAD. A helical transmembrane segment spans residues 450 to 470; it reads IVYALYLVAAAAFILYCLSSL.

It belongs to the paxM FAD-dependent monooxygenase family. It depends on FAD as a cofactor.

It is found in the membrane. The protein operates within secondary metabolite biosynthesis. In terms of biological role, FAD-dependent monooxygenase; part of the gene cluster that mediates the biosynthesis of lolitrems, indole-diterpene mycotoxins that are potent tremorgens in mammals, and are synthesized by clavicipitaceous fungal endophytes in association with their grass hosts. The geranylgeranyl diphosphate (GGPP) synthase ltmG is proposed to catalyze the first step in lolitrem biosynthesis. LtmG catalyzes a series of iterative condensations of isopentenyl diphosphate (IPP) with dimethylallyl diphosphate (DMAPP), geranyl diphosphate (GPP), and farnesyl diphosphate (FPP), to form GGPP. GGPP then condenses with indole-3-glycerol phosphate to form 3-geranylgeranylindole, an acyclic intermediate, to be incorporated into paxilline. Either ltmG or ltmC could be responsible for this step, as both are putative prenyl transferases. The FAD-dependent monooxygenase ltmM then catalyzes the epoxidation of the two terminal alkenes of the geranylgeranyl moiety, which is subsequently cyclized by ltmC, to paspaline. The cytochrome P450 monooxygenases ltmQ and ltmP can sequentially oxidize paspaline to terpendole E and terpendole F. Alternatively, ltmP converts paspaline to an intermediate which is oxidized by ltmQ to terpendole F. LtmF, ltmK, ltmE and ltmJ appear to be unique to the epichloe endophytes. The prenyltransferase ltmF is involved in the 27-hydroxyl-O-prenylation. The cytochrome P450 monooxygenase ltmK is required for the oxidative acetal ring formation. The multi-functional prenyltransferase ltmE is required for C20- and C21-prenylations of the indole ring of paspalanes and acts together with the cytochrome P450 monooxygenase ltmJ to yield lolitremanes by multiple oxidations and ring closures. The stereoisomer pairs of lolitriol and lolitrem N or lolitrem B and lolitrem F may be attributed to variations in the way in which ring closure can occur under the action of ltmJ. While the major product of this pathway is lolitrem B, the prenyl transferases and cytochrome P450 monooxygenases identified in this pathway have a remarkable versatility in their regio- and stereo-specificities to generate a diverse range of metabolites that are products of a metabolic grid rather than a linear pathway. The protein is FAD-dependent monooxygenase ltmM (ltmM) of Epichloe festucae (strain Fl1).